We begin with the raw amino-acid sequence, 575 residues long: Serine/threonine-protein kinase Pink1, mitochondrial (575 aa).

Residues 1 to 51 (MSLLAYTNLLLQNGRIFRYYKKANIKKFIKKIIKLDLKSTPSEASVSRQTF) constitute a mitochondrion transit peptide. Topologically, residues 52–94 (LSTGLNSVKNAVQLQARKLLINNVLERVTPTLNSDLKKKAAKR) are mitochondrial intermembrane. The chain crosses the membrane as a helical span at residues 95–118 (LFYGDSAPFFALVGVSLASGSGLL). The Cytoplasmic segment spans residues 119–575 (TKDDELEGIC…KWIQELHIYN (457 aa)). Residue lysine 193 participates in ATP binding. Serine 202 and serine 204 each carry phosphoserine; by autocatalysis. A Mg(2+)-binding site is contributed by glutamate 214. Threonine 305 is modified (phosphothreonine; by autocatalysis). Aspartate 334 acts as the Proton acceptor in catalysis. The Mg(2+) site is built by asparagine 339 and aspartate 357.

It belongs to the protein kinase superfamily. Ser/Thr protein kinase family. It depends on Mg(2+) as a cofactor. Proteolytically cleaved. In healthy cells, the precursor is continuously imported into mitochondria where it is proteolytically cleaved into its short form by the mitochondrial rhomboid protease rho-7 (8231301). The short form is then released into the cytosol where it rapidly undergoes proteasome-dependent degradation. In unhealthy cells, when cellular stress conditions lead to the loss of mitochondrial membrane potential, mitochondrial import is impaired leading to the precursor accumulating on the outer mitochondrial membrane (OMM). In terms of processing, autophosphorylated. Autophosphorylated on Ser-202, which activates kinase activity. Loss of mitochondrial membrane potential results in the precursor accumulating on the outer mitochondrial membrane (OMM) where it is activated by autophosphorylation at Ser-202. Autophosphorylation is sufficient and essential for selective recruitment of park to depolarized mitochondria, likely via Pink1-dependent phosphorylation of polyubiquitin chains. Also autophosphorylated at Ser-204 and Thr-305.

It is found in the mitochondrion outer membrane. The protein resides in the mitochondrion inner membrane. The protein localises to the cytoplasm. Its subcellular location is the cytosol. The enzyme catalyses L-seryl-[protein] + ATP = O-phospho-L-seryl-[protein] + ADP + H(+). It carries out the reaction L-threonyl-[protein] + ATP = O-phospho-L-threonyl-[protein] + ADP + H(+). Its function is as follows. Acts as a serine/threonine-protein kinase. Exhibits a substrate preference for proline at position P+1 and a general preference at several residues for basic residues such as arginine. Also exhibits moderate preferences for a phosphotyrosine at position P-3 and a tryptophan at P-5. Critical to mitochondrial homeostasis it mediates several pathways that maintain mitochondrial health and function Protects against mitochondrial dysfunction during cellular stress by phosphorylating mitochondrial proteins such as park and likely Drp1, to coordinate mitochondrial quality control mechanisms that remove and replace dysfunctional mitochondrial components. Depending on the severity of mitochondrial damage and/or dysfunction, activity ranges from preventing apoptosis and stimulating mitochondrial biogenesis to regulating mitochondrial dynamics and eliminating severely damaged mitochondria via mitophagy. Appears to be particularly important in maintaining the physiology and function of cells with high energy demands that are undergoing stress or altered metabolic environment, including spermatids, muscle cells and neurons such as the dopaminergic (DA) neurons. Mediates the translocation and activation of park at the outer membrane (OMM) of dysfunctional/depolarized mitochondria. At the OMM of damaged mitochondria, phosphorylates pre-existing polyubiquitin chains, the Pink1-phosphorylated polyubiquitin then recruits park from the cytosol to the OMM where park is fully activated by phosphorylation at 'Ser-94' by Pink1. When cellular stress results in irreversible mitochondrial damage, functions with park to promote the clearance of dysfunctional and/or depolarized mitochondria by selective autophagy (mitophagy). The Pink1-park pathway also promotes fission and/or inhibits fusion of damaged mitochondria, by phosphorylating and thus promoting the park-dependent degradation of proteins involved in mitochondrial fusion/fission such as Marf, Opa1 and fzo. This prevents the refusion of unhealthy mitochondria with the mitochondrial network or initiates mitochondrial fragmentation facilitating their later engulfment by autophagosomes. Also likely to promote mitochondrial fission independently of park and Atg7-mediated mitophagy, via the phosphorylation and activation of Drp1. Regulates motility of damaged mitochondria by phosphorylating Miro which likely promotes its park-dependent degradation by the proteasome; in motor neurons, this inhibits mitochondrial intracellular anterograde transport along the axons which probably increases the chance of the mitochondria being eliminated in the soma. The Pink1-park pathway is also involved in mitochondrial regeneration processes such as promoting mitochondrial biogenesis, activating localized mitochondrial repair, promoting selective turnover of mitochondrial proteins and initiating the mitochondrial import of endogenous proteins. Involved in mitochondrial biogenesis by promoting the park-dependent ubiquitination of transcriptional repressor Paris which leads to its subsequent proteasomal degradation and allows activation of the transcription factor srl. Functions with park to promote localized mitochondrial repair by activating the translation of specific nuclear-encoded mitochondrial RNAs (nc-mtRNAs) on the mitochondrial surface, including several key electron transport chain component nc-mtRNAs. During oogenesis, phosphorylates and inactivates larp on the membrane of defective mitochondria, thus impairing local translation and mtDNA replication and consequently, reducing transmission of deleterious mtDNA mutations to the mature oocyte. Phosphorylates the mitochondrial acyl-CoA dehydrogenase Mcad, and appears to be important for maintaining fatty acid and amino acid metabolism via a mechanism that is independent of it's role in maintaining production of ATP. In Pediculus humanus subsp. corporis (Body louse), this protein is Serine/threonine-protein kinase Pink1, mitochondrial.